Reading from the N-terminus, the 158-residue chain is N-alpha-acetyltransferase RimI (158 aa).

The region spanning 8 to 155 (VTIGALTRAD…DAYTMRRDSG (148 aa)) is the N-acetyltransferase domain.

It belongs to the acetyltransferase family. RimI subfamily. Monomer. Interacts with TsaD. Interacts with GroS/GroES.

It catalyses the reaction N-terminal L-methionyl-L-alanyl-[protein] + acetyl-CoA = N-terminal N(alpha)-acetyl-L-methionyl-L-alanyl-[protein] + CoA + H(+). It carries out the reaction N-terminal L-methionyl-L-seryl-[protein] + acetyl-CoA = N-terminal N(alpha)-acetyl-L-methionyl-L-seryl-[protein] + CoA + H(+). The catalysed reaction is N-terminal L-methionyl-L-valyl-[protein] + acetyl-CoA = N-terminal N(alpha)-acetyl-L-methionyl-L-valyl-[protein] + CoA + H(+). The enzyme catalyses N-terminal L-methionyl-L-threonyl-[protein] + acetyl-CoA = N-terminal N(alpha)-acetyl-L-methionyl-L-threonyl-[protein] + CoA + H(+). It catalyses the reaction N-terminal L-methionyl-L-lysyl-[protein] + acetyl-CoA = N-terminal N(alpha)-acetyl-L-methionyl-L-lysyl-[protein] + CoA + H(+). It carries out the reaction N-terminal L-methionyl-L-leucyl-[protein] + acetyl-CoA = N-terminal N(alpha)-acetyl-L-methionyl-L-leucyl-[protein] + CoA + H(+). The catalysed reaction is N-terminal L-methionyl-L-phenylalanyl-[protein] + acetyl-CoA = N-terminal N(alpha)-acetyl-L-methionyl-L-phenylalanyl-[protein] + CoA + H(+). The enzyme catalyses N-terminal L-methionyl-L-tyrosyl-[protein] + acetyl-CoA = N-terminal N(alpha)-acetyl-L-methionyl-L-tyrosyl-[protein] + CoA + H(+). It catalyses the reaction N-terminal glycyl-[protein] + acetyl-CoA = N-terminal N(alpha)-acetylglycyl-[protein] + CoA + H(+). It carries out the reaction N-terminal L-alanyl-[protein] + acetyl-CoA = N-terminal N(alpha)-acetyl-L-alanyl-[protein] + CoA + H(+). The catalysed reaction is N-terminal L-seryl-[protein] + acetyl-CoA = N-terminal N(alpha)-acetyl-L-seryl-[protein] + CoA + H(+). The enzyme catalyses N-terminal L-valyl-[protein] + acetyl-CoA = N-terminal N(alpha)-acetyl-L-valyl-[protein] + CoA + H(+). It catalyses the reaction N-terminal L-cysteinyl-[protein] + acetyl-CoA = N-terminal N(alpha)-acetyl-L-cysteinyl-[protein] + CoA + H(+). It carries out the reaction N-terminal L-threonyl-[protein] + acetyl-CoA = N-terminal N(alpha)-acetyl-L-threonyl-[protein] + CoA + H(+). Functionally, N-alpha-acetyltransferase that specifically mediates the acetylation of N-terminal residues. Able to mediate acetylation of a wide variety of N-terminal residues, with preference for hydrophobic N-termini. Acetylates GroS/GroES and GroEL1. Able to acetylate the ribosomal protein bS18, but it is unclear whether it acetylates its N-terminal alanine residue. The sequence is that of N-alpha-acetyltransferase RimI from Mycobacterium tuberculosis (strain ATCC 25618 / H37Rv).